The sequence spans 155 residues: Large ribosomal subunit protein uL22c (155 aa).

This sequence belongs to the universal ribosomal protein uL22 family. As to quaternary structure, part of the 50S ribosomal subunit.

The protein localises to the plastid. Its subcellular location is the chloroplast. Its function is as follows. This protein binds specifically to 23S rRNA. In terms of biological role, the globular domain of the protein is located near the polypeptide exit tunnel on the outside of the subunit, while an extended beta-hairpin is found that lines the wall of the exit tunnel in the center of the 70S ribosome. In Coffea arabica (Arabian coffee), this protein is Large ribosomal subunit protein uL22c (rpl22).